The following is a 714-amino-acid chain: Polyribonucleotide nucleotidyltransferase (714 aa).

Mg(2+)-binding residues include Asp493 and Asp499. Residues 559–618 (PRIETTKIPADRIGELIGPGGKNIKAIQAESGADINIEEDGTVHIYAAKQEGLDRALELV) form the KH domain. One can recognise an S1 motif domain in the interval 628-696 (GELYTGKIVS…DKGRVKMSIR (69 aa)).

It belongs to the polyribonucleotide nucleotidyltransferase family. The cofactor is Mg(2+).

Its subcellular location is the cytoplasm. The catalysed reaction is RNA(n+1) + phosphate = RNA(n) + a ribonucleoside 5'-diphosphate. Its function is as follows. Involved in mRNA degradation. Catalyzes the phosphorolysis of single-stranded polyribonucleotides processively in the 3'- to 5'-direction. The sequence is that of Polyribonucleotide nucleotidyltransferase from Akkermansia muciniphila (strain ATCC BAA-835 / DSM 22959 / JCM 33894 / BCRC 81048 / CCUG 64013 / CIP 107961 / Muc).